Here is a 445-residue protein sequence, read N- to C-terminus: GTPase Der (445 aa).

2 EngA-type G domains span residues 2–166 (FRVA…PEYE) and 182–355 (IKVA…NQAW). GTP is bound by residues 8–15 (GIPNVGKS), 55–59 (DTGGY), 118–121 (NKID), 188–195 (GKPNAGKS), 235–239 (DTAGM), and 300–303 (NKID). Residues 356 to 440 (KRVGTGQLNR…PIKLIFRGKE (85 aa)) enclose the KH-like domain.

This sequence belongs to the TRAFAC class TrmE-Era-EngA-EngB-Septin-like GTPase superfamily. EngA (Der) GTPase family. In terms of assembly, associates with the 50S ribosomal subunit.

GTPase that plays an essential role in the late steps of ribosome biogenesis. The protein is GTPase Der of Sulfurihydrogenibium sp. (strain YO3AOP1).